We begin with the raw amino-acid sequence, 386 residues long: MHARGPHGQLSPALPLASSVLMLLMSTLWLVGAGPGLVLAPELLLDPWQVHRLLTHALGHTALPGLLLSLLLLPTVGWQQECHLGTLRFLHASALLALASGLLAVLLAGLGLSSAAGSCGYMPVHLAMLAGEGHRPRRPRGALPPWLSPWLLLALTPLLSSEPPFLQLLCGLLAGLAYAAGAFRWLEPSERRLQVLQEGVLCRTLAGCWPLRLLATPGSLAELPVTHPAGVRPPIPGPPYVASPDLWSHWEDSALPPPSLRPVQPTWEGSSEAGLDWAGASFSPGTPMWAALDEQMLQEGIQASLLDGPAQEPQSAPWLSKSSVSSLRLQQLERMGFPTEQAVVALAATGRVEGAVSLLVGGQVGTETLVTHGKGGPAHSEGPGPP.

The next 5 helical transmembrane spans lie at 20-40, 58-78, 92-112, 141-161, and 163-183; these read VLML…LVLA, LGHT…TVGW, ASAL…GLGL, GALP…LLSS, and PPFL…AGAF. The UBA domain occupies 324 to 362; it reads VSSLRLQQLERMGFPTEQAVVALAATGRVEGAVSLLVGG.

The protein resides in the membrane. In Homo sapiens (Human), this protein is Rhomboid domain-containing protein 3 (RHBDD3).